We begin with the raw amino-acid sequence, 386 residues long: Phosphoglycerate kinase (386 aa).

Residues 21–23 (DLN), arginine 36, 59–62 (HLGR), arginine 113, and arginine 146 contribute to the substrate site. ATP is bound by residues lysine 197, glutamate 314, and 340-343 (GGDT).

The protein belongs to the phosphoglycerate kinase family. In terms of assembly, monomer.

It localises to the cytoplasm. It carries out the reaction (2R)-3-phosphoglycerate + ATP = (2R)-3-phospho-glyceroyl phosphate + ADP. Its pathway is carbohydrate degradation; glycolysis; pyruvate from D-glyceraldehyde 3-phosphate: step 2/5. This Ectopseudomonas mendocina (strain ymp) (Pseudomonas mendocina) protein is Phosphoglycerate kinase.